The sequence spans 114 residues: Small ribosomal subunit protein uS17 (114 aa).

The protein belongs to the universal ribosomal protein uS17 family. Part of the 30S ribosomal subunit.

One of the primary rRNA binding proteins, it binds specifically to the 5'-end of 16S ribosomal RNA. In Sulfolobus acidocaldarius (strain ATCC 33909 / DSM 639 / JCM 8929 / NBRC 15157 / NCIMB 11770), this protein is Small ribosomal subunit protein uS17.